Reading from the N-terminus, the 154-residue chain is MGLSDGEWQLVLNAWGKVEADVAGHGQEVLIRLFTGHPETLEKFDKFKHLKTEAEMKASEDLKKHGNTVLTALGGILKKKGHHEAEVKHLAESHANKHKIPVKYLEFISDAIIHVLHAKHPSDFGADAQAAMSKALELFRNDMAAQYKVLGFHG.

One can recognise a Globin domain in the interval 2 to 148 (GLSDGEWQLV…FRNDMAAQYK (147 aa)). Phosphoserine is present on serine 4. Residue histidine 65 participates in nitrite binding. Histidine 65 lines the O2 pocket. The residue at position 68 (threonine 68) is a Phosphothreonine. Histidine 94 contributes to the heme b binding site.

The protein belongs to the globin family. As to quaternary structure, monomeric.

The protein localises to the cytoplasm. It is found in the sarcoplasm. It catalyses the reaction Fe(III)-heme b-[protein] + nitric oxide + H2O = Fe(II)-heme b-[protein] + nitrite + 2 H(+). The enzyme catalyses H2O2 + AH2 = A + 2 H2O. Functionally, monomeric heme protein which primary function is to store oxygen and facilitate its diffusion within muscle tissues. Reversibly binds oxygen through a pentacoordinated heme iron and enables its timely and efficient release as needed during periods of heightened demand. Depending on the oxidative conditions of tissues and cells, and in addition to its ability to bind oxygen, it also has a nitrite reductase activity whereby it regulates the production of bioactive nitric oxide. Under stress conditions, like hypoxia and anoxia, it also protects cells against reactive oxygen species thanks to its pseudoperoxidase activity. The chain is Myoglobin (MB) from Bos mutus grunniens (Wild yak).